Reading from the N-terminus, the 525-residue chain is Peptide chain release factor 3 (525 aa).

The tr-type G domain occupies 9 to 276 (AKRRTFAIIS…GFTRYAPAPQ (268 aa)). Residues 18-25 (SHPDAGKT), 86-90 (DTPGH), and 140-143 (NKFD) each bind GTP.

Belongs to the TRAFAC class translation factor GTPase superfamily. Classic translation factor GTPase family. PrfC subfamily.

It is found in the cytoplasm. Increases the formation of ribosomal termination complexes and stimulates activities of RF-1 and RF-2. It binds guanine nucleotides and has strong preference for UGA stop codons. It may interact directly with the ribosome. The stimulation of RF-1 and RF-2 is significantly reduced by GTP and GDP, but not by GMP. This is Peptide chain release factor 3 from Francisella tularensis subsp. tularensis (strain WY96-3418).